A 741-amino-acid polypeptide reads, in one-letter code: Transcription activator of gluconeogenesis BDBG_05438 (741 aa).

The interval 1 to 70 (MTASTRNGSP…NAKDPLRPRR (70 aa)) is disordered. Residues 25-61 (KSMTTTPANPPETKSQTNGKGSGTAQSSQKPASTSAN) show a composition bias toward polar residues. Positions 77 to 105 (CFACQRAHLTCGDERPCQRCIKRGLQDAC) form a DNA-binding region, zn(2)-C6 fungal-type. Disordered regions lie at residues 135–163 (QANTTRNIPNQRGNASNSNSNKVSRQSVS), 202–239 (SVFHAQSPSSTQNFDLSSNPQTQNLSSAMSQTASSVSG), 285–321 (GAGDTPPSDSATQRGSIGRSSGTFTAQNFGDSANNQS), 401–421 (TNLMHPTNTPQQSRISTPGLK), 559–590 (GSSLSSASSVRGSSTFTPRNNNTHNSIDPHTG), and 655–741 (FHGK…AKRG). Positions 202 to 226 (SVFHAQSPSSTQNFDLSSNPQTQNL) are enriched in polar residues. Low complexity predominate over residues 227 to 238 (SSAMSQTASSVS). 2 stretches are compositionally biased toward polar residues: residues 291–321 (PSDSATQRGSIGRSSGTFTAQNFGDSANNQS) and 401–416 (TNLMHPTNTPQQSRIS). Residues 560 to 572 (SSLSSASSVRGSS) show a composition bias toward low complexity. Polar residues predominate over residues 573–586 (TFTPRNNNTHNSID). Residues 672-718 (TGTTTSGDVATTTATGTSTSNGANANTNGNNTNPNDPSTAASSSASS) are compositionally biased toward low complexity. Over residues 723–732 (RSNHLGKRGG) the composition is skewed to basic residues.

The protein belongs to the ERT1/acuK family.

Its subcellular location is the nucleus. Its function is as follows. Transcription factor which regulates nonfermentable carbon utilization. Activator of gluconeogenetic genes. The sequence is that of Transcription activator of gluconeogenesis BDBG_05438 from Blastomyces gilchristii (strain SLH14081) (Blastomyces dermatitidis).